A 304-amino-acid polypeptide reads, in one-letter code: Non-specific ribonucleoside hydrolase RihC (304 aa).

The active site involves His-233.

The protein belongs to the IUNH family. RihC subfamily.

Its function is as follows. Hydrolyzes both purine and pyrimidine ribonucleosides with a broad-substrate specificity. This Escherichia coli O6:H1 (strain CFT073 / ATCC 700928 / UPEC) protein is Non-specific ribonucleoside hydrolase RihC.